We begin with the raw amino-acid sequence, 282 residues long: Bifunctional protein FolD (282 aa).

Residues 160–162, Ser185, and Ile228 each bind NADP(+); that span reads NRS.

Belongs to the tetrahydrofolate dehydrogenase/cyclohydrolase family. In terms of assembly, homodimer.

It carries out the reaction (6R)-5,10-methylene-5,6,7,8-tetrahydrofolate + NADP(+) = (6R)-5,10-methenyltetrahydrofolate + NADPH. The catalysed reaction is (6R)-5,10-methenyltetrahydrofolate + H2O = (6R)-10-formyltetrahydrofolate + H(+). It participates in one-carbon metabolism; tetrahydrofolate interconversion. Its function is as follows. Catalyzes the oxidation of 5,10-methylenetetrahydrofolate to 5,10-methenyltetrahydrofolate and then the hydrolysis of 5,10-methenyltetrahydrofolate to 10-formyltetrahydrofolate. The polypeptide is Bifunctional protein FolD (Cenarchaeum symbiosum (strain A)).